The following is a 171-amino-acid chain: 3-hydroxydecanoyl-[acyl-carrier-protein] dehydratase (171 aa).

His70 is an active-site residue.

Belongs to the thioester dehydratase family. FabA subfamily. As to quaternary structure, homodimer.

It is found in the cytoplasm. The enzyme catalyses a (3R)-hydroxyacyl-[ACP] = a (2E)-enoyl-[ACP] + H2O. It carries out the reaction (3R)-hydroxydecanoyl-[ACP] = (2E)-decenoyl-[ACP] + H2O. The catalysed reaction is (2E)-decenoyl-[ACP] = (3Z)-decenoyl-[ACP]. Its pathway is lipid metabolism; fatty acid biosynthesis. Functionally, necessary for the introduction of cis unsaturation into fatty acids. Catalyzes the dehydration of (3R)-3-hydroxydecanoyl-ACP to E-(2)-decenoyl-ACP and then its isomerization to Z-(3)-decenoyl-ACP. Can catalyze the dehydratase reaction for beta-hydroxyacyl-ACPs with saturated chain lengths up to 16:0, being most active on intermediate chain length. This chain is 3-hydroxydecanoyl-[acyl-carrier-protein] dehydratase, found in Pseudomonas fluorescens (strain Pf0-1).